Here is a 213-residue protein sequence, read N- to C-terminus: Octanoyltransferase (213 aa).

Residues 32–207 (ENTPDEIWLV…NILALLNNPP (176 aa)) form the BPL/LPL catalytic domain. Residues 71 to 78 (RGGQVTYH), 138 to 140 (SLG), and 151 to 153 (GLA) contribute to the substrate site. The Acyl-thioester intermediate role is filled by cysteine 169.

This sequence belongs to the LipB family.

It is found in the cytoplasm. The catalysed reaction is octanoyl-[ACP] + L-lysyl-[protein] = N(6)-octanoyl-L-lysyl-[protein] + holo-[ACP] + H(+). The protein operates within protein modification; protein lipoylation via endogenous pathway; protein N(6)-(lipoyl)lysine from octanoyl-[acyl-carrier-protein]: step 1/2. In terms of biological role, catalyzes the transfer of endogenously produced octanoic acid from octanoyl-acyl-carrier-protein onto the lipoyl domains of lipoate-dependent enzymes. Lipoyl-ACP can also act as a substrate although octanoyl-ACP is likely to be the physiological substrate. This is Octanoyltransferase from Citrobacter koseri (strain ATCC BAA-895 / CDC 4225-83 / SGSC4696).